The chain runs to 270 residues: MQSKLLLSTKLTSQGKTQLDQYFVSPPFKVMTLPAYDDAWQNGLNAMQMSSSPGLLASDLFDIEISLADDTALSLNTQAFTRVQSMNEGDYATQKTCIKLGKNSRLFYLPHPLVLHKDSSFKQTTEIEMSEQSELIYGEIVAIGRVLNGERFAFRHFASYLRISYQNRPIIADRIQWLPAKMALTSLSQMEDFSHQGSLTYVNLAKNAVEIKAMVSELQALAAEQKNMLIGVSQLNEGGLMVRVLAHRADIIQHLFERIGQVLKAQSNIV.

This sequence belongs to the UreD family. UreD, UreF and UreG form a complex that acts as a GTP-hydrolysis-dependent molecular chaperone, activating the urease apoprotein by helping to assemble the nickel containing metallocenter of UreC. The UreE protein probably delivers the nickel.

Its subcellular location is the cytoplasm. Required for maturation of urease via the functional incorporation of the urease nickel metallocenter. The chain is Urease accessory protein UreD from Actinobacillus pleuropneumoniae serotype 3 (strain JL03).